A 360-amino-acid polypeptide reads, in one-letter code: Lipid-A-disaccharide synthase (360 aa).

Belongs to the LpxB family.

It catalyses the reaction a lipid X + a UDP-2-N,3-O-bis[(3R)-3-hydroxyacyl]-alpha-D-glucosamine = a lipid A disaccharide + UDP + H(+). It functions in the pathway bacterial outer membrane biogenesis; LPS lipid A biosynthesis. Its function is as follows. Condensation of UDP-2,3-diacylglucosamine and 2,3-diacylglucosamine-1-phosphate to form lipid A disaccharide, a precursor of lipid A, a phosphorylated glycolipid that anchors the lipopolysaccharide to the outer membrane of the cell. This Helicobacter pylori (strain HPAG1) protein is Lipid-A-disaccharide synthase.